We begin with the raw amino-acid sequence, 279 residues long: B3 domain-containing protein Os11g0156000 (279 aa).

A DNA-binding region (TF-B3) is located at residues 38 to 144 (FEKPLTPSDV…DRLFIGCRRR (107 aa)). Disordered stretches follow at residues 148–182 (AAAQ…YSTS) and 203–228 (HDHG…AGSA). Over residues 159–168 (VRVAPAAQNA) the composition is skewed to low complexity. Over residues 203–219 (HDHGDMHHADESPRDTD) the composition is skewed to basic and acidic residues.

The protein resides in the nucleus. This Oryza sativa subsp. japonica (Rice) protein is B3 domain-containing protein Os11g0156000.